The chain runs to 58 residues: Large ribosomal subunit protein bL32c (58 aa).

Disordered stretches follow at residues 1 to 21 (MAVPKKRTPKSKTRSRKSQWM) and 34 to 58 (LAGRLAARQDQMQPTQMQPTQMQPN). Over residues 44–58 (QMQPTQMQPTQMQPN) the composition is skewed to low complexity.

Belongs to the bacterial ribosomal protein bL32 family.

The protein resides in the plastid. It localises to the chloroplast. In Cyanidioschyzon merolae (strain NIES-3377 / 10D) (Unicellular red alga), this protein is Large ribosomal subunit protein bL32c.